An 83-amino-acid polypeptide reads, in one-letter code: Large ribosomal subunit protein bL31B (83 aa).

The protein belongs to the bacterial ribosomal protein bL31 family. Type B subfamily. Part of the 50S ribosomal subunit.

In Levilactobacillus brevis (strain ATCC 367 / BCRC 12310 / CIP 105137 / JCM 1170 / LMG 11437 / NCIMB 947 / NCTC 947) (Lactobacillus brevis), this protein is Large ribosomal subunit protein bL31B.